The following is a 352-amino-acid chain: NADH-ubiquinone oxidoreductase chain 2 (352 aa).

A run of 12 helical transmembrane segments spans residues 4–24, 26–46, 67–87, 96–116, 124–144, 148–168, 177–197, 198–218, 241–261, 264–284, 290–310, and 332–352; these read IVSTFLFVTVVSGTIIVVSSE, WFIIWVGLELSTLALVPILCS, AALLLNGALGQAWLTGSWSIL, ICLSIALAFKIGLAPVHFWFP, FFQGLIIATWQKIAPLILMFY, LGFSYLLITPSLISVLIGGWG, KILAFSSIGNMGWLVITSAYS, FNAAIIMLVIYLIINTSLFLL, VALVLLVMLSLGGLPPLTGFI, FTSLYFLVANNFIILSSIMII, YFFYLRISFNTSLFLFPQHII, and SVSTVLSTLAIPLTLPLYIIT.

Belongs to the complex I subunit 2 family.

The protein localises to the mitochondrion inner membrane. The catalysed reaction is a ubiquinone + NADH + 5 H(+)(in) = a ubiquinol + NAD(+) + 4 H(+)(out). Its function is as follows. Core subunit of the mitochondrial membrane respiratory chain NADH dehydrogenase (Complex I) that is believed to belong to the minimal assembly required for catalysis. Complex I functions in the transfer of electrons from NADH to the respiratory chain. The immediate electron acceptor for the enzyme is believed to be ubiquinone. The sequence is that of NADH-ubiquinone oxidoreductase chain 2 (ND2) from Strongylocentrotus purpuratus (Purple sea urchin).